The following is a 292-amino-acid chain: NAD kinase (292 aa).

Residue Asp73 is the Proton acceptor of the active site. Residues 73-74 (DG), 147-148 (NE), His158, Arg175, Asp177, 188-193 (TGYSLS), and Gln248 each bind NAD(+).

This sequence belongs to the NAD kinase family. A divalent metal cation is required as a cofactor.

The protein resides in the cytoplasm. The catalysed reaction is NAD(+) + ATP = ADP + NADP(+) + H(+). Functionally, involved in the regulation of the intracellular balance of NAD and NADP, and is a key enzyme in the biosynthesis of NADP. Catalyzes specifically the phosphorylation on 2'-hydroxyl of the adenosine moiety of NAD to yield NADP. The chain is NAD kinase from Buchnera aphidicola subsp. Baizongia pistaciae (strain Bp).